The following is a 757-amino-acid chain: MDVNPTLLFLKVPAQNAISTTFPYTGDPPYSHGTGTGYTMDTVNRTHQYSEKGKWTTNTETGAPQLNPIDGPLPEDNEPSGYAQTDCVLEAMAFLEESHPGIFENSCLETMEIVQQTRVDKLTQGRQTYDWTLNRNQPAATALANTIEIFRSNGLTANESGRLIDFLKDVMESMDKEEMEITTHFQRKRRVRDNMTKKMVTQRTIGKKKQRLNKKSYLIRALTLNTMTKDAERGKLKRRAIATPGMQIRGFVYFVETLARSICEKLEQSGLPVGGNEKKAKLANVVRKMMTNSQDTELSFTITGDNTKWNENQNPRMFLAMITYITRNQPEWFRNVLSIAPIMFSNKMARLGKGYMFESKSMKLRTQIPAEMLANIDLKYFNESTRKKIEKIRPLLIDGTASLSPGMMMGMFNMLSTVLGVSILNLGQKRYTKTTYWWDGLQSSDDFALIVNAPNHEGIQAGVDRFYRTCKLVGINMSKKKSYINRTGTFEFTSFFYRYGFVANFSMELPSFGVSGINESADMSIGVTVIKNNMINNDLGPATAQMALQLFIKDYRYTYRCHRGDTQIQTRRSFELKKLWEQTRSKAGLLVSDGGPNLYNIRNLHIPEVCLKWELMDEDYQGRLCNPLNPFVSHKEIESVNNAVVMPAHGPAKSVEYDAVATTHSWIPKRNRSILNTSQRGILEDEQMYQKCCNLFEKFFPSSSYRRPVGISSMVEAMVSRARIDARIDFESGRIKKEEFAEIMKICSTIEELRRQK.

The segment at 50–82 (SEKGKWTTNTETGAPQLNPIDGPLPEDNEPSGY) is disordered. The span at 55 to 64 (WTTNTETGAP) shows a compositional bias: polar residues. 2 consecutive short sequence motifs (nuclear localization signal) follow at residues 187 to 195 (RKRRVRDNM) and 203 to 216 (RTIG…NKKS). The tract at residues 249–256 (RGFVYFVE) is promoter-binding site. Positions 286-483 (VRKMMTNSQD…GINMSKKKSY (198 aa)) constitute a RdRp catalytic domain.

It belongs to the influenza viruses polymerase PB1 family. Influenza RNA polymerase is composed of three subunits: PB1, PB2 and PA. Interacts (via N-terminus) with PA (via C-terminus). Interacts (via C-terminus) with PB2 (via N-terminus); this interaction is essential for transcription initiation. Post-translationally, phosphorylated by host PRKCA.

The protein resides in the host nucleus. Its subcellular location is the host cytoplasm. The enzyme catalyses RNA(n) + a ribonucleoside 5'-triphosphate = RNA(n+1) + diphosphate. Its function is as follows. RNA-dependent RNA polymerase which is responsible for replication and transcription of virus RNA segments. The transcription of viral mRNAs occurs by a unique mechanism called cap-snatching. 5' methylated caps of cellular mRNAs are cleaved after 10-13 nucleotides by PA. In turn, these short capped RNAs are used as primers by PB1 for transcription of viral mRNAs. During virus replication, PB1 initiates RNA synthesis and copy vRNA into complementary RNA (cRNA) which in turn serves as a template for the production of more vRNAs. The protein is RNA-directed RNA polymerase catalytic subunit of Influenza A virus (strain A/Silky Chicken/Hong Kong/SF189/2001 H5N1 genotype A).